A 921-amino-acid polypeptide reads, in one-letter code: Short transient receptor potential channel 3 (921 aa).

The segment at 1 to 73 is disordered; sequence MSTKVRKCKE…PPFSHGPDLS (73 aa). Residues 1 to 459 lie on the Cytoplasmic side of the membrane; that stretch reads MSTKVRKCKE…KILRSPFMKF (459 aa). The segment covering 19 to 31 has biased composition (acidic residues); the sequence is PEEEEDEGEDEGA. ANK repeat units lie at residues 111 to 140, 146 to 175, 177 to 203, and 232 to 261; these read AEEE…TLNV, MGQN…LARI, DALL…FAAS, and PDIT…RIER. Glutamate 158 contributes to the Ca(2+) binding site. Residues 460-477 traverse the membrane as a helical segment; the sequence is VAHAASFIIFLGLLVFNA. Over 478-508 the chain is Extracellular; sequence SDRFEGITTLPNITVTDYPKQIFRVKTTQFT. An N-linked (GlcNAc...) asparagine glycan is attached at asparagine 489. A helical transmembrane segment spans residues 509–527; sequence WTEMLIMVWVLGMMWSECK. Ca(2+)-binding residues include glutamate 525, glutamate 528, and asparagine 543. At 528-540 the chain is on the cytoplasmic side; that stretch reads ELWLEGPREYILQ. A helical transmembrane segment spans residues 541–562; the sequence is LWNVLDFGMLSIFIAAFTARFL. Topologically, residues 563–606 are extracellular; sequence AFLQATKAQQYVDSYVQESDLSEVTLPPEIQYFTYARDKWLPSD. The helical transmembrane segment at 607–630 threads the bilayer; the sequence is PQIISEGLYAIAVVLSFSRIAYIL. The Cytoplasmic portion of the chain corresponds to 631-649; it reads PANESFGPLQISLGRTVKD. One copy of the ANK 5 repeat lies at 634-663; that stretch reads ESFGPLQISLGRTVKDIFKFMVLFIMVFFA. Residues 650-673 form a helical membrane-spanning segment; sequence IFKFMVLFIMVFFAFMIGMFILYS. Over 674–713 the chain is Extracellular; the sequence is YYLGAKVNAAFTTVEESFKTLFWSIFGLSEVTSVVLKYDH. The helical transmembrane segment at 714–739 threads the bilayer; that stretch reads KFIENIGYVLYGIYNVTMVVVLLNML. The Cytoplasmic portion of the chain corresponds to 740–921; that stretch reads IAMINSSYQE…KLNPSMLRCE (182 aa). The binds to IP3R3 stretch occupies residues 850–870; it reads QIMKRLIKRYVLKAQVDKEND. Glutamate 871, glutamate 874, glutamate 876, and aspartate 883 together coordinate Ca(2+).

Belongs to the transient receptor (TC 1.A.4) family. STrpC subfamily. TRPC3 sub-subfamily. Homotetramer. Interacts with ITPR1. Interacts with ITPR3. Interacts with MX1. Interacts with RNF24. Interacts with JPH2; the interaction is involved in maintaining Ca(2+) homeostasis in skeletal muscle and is mediated by JPH2 'Ser-165' phosphorylation. In terms of assembly, interacts with isoform short of TRPC1. In terms of tissue distribution, expressed predominantly in brain and at much lower levels in ovary, colon, small intestine, lung, prostate, placenta and testis.

Its subcellular location is the cell membrane. The catalysed reaction is Ca(2+)(in) = Ca(2+)(out). Activated by diacylglycerol (DAG) in a membrane-delimited fashion, independently of protein kinase C. Activated by inositol 1,4,5-triphosphate receptors (ITPR) with bound IP3. May be activated by internal calcium store depletion. Inhibited by intracellular Ca(2+). Forms a receptor-activated non-selective calcium permeant cation channel. Functionally, forms a receptor-activated non-selective calcium permeant cation channel. May be operated by a phosphatidylinositol second messenger system activated by receptor tyrosine kinases or G-protein coupled receptors. The chain is Short transient receptor potential channel 3 (TRPC3) from Homo sapiens (Human).